Here is a 256-residue protein sequence, read N- to C-terminus: uncharacterized protein (256 aa).

The N-terminal stretch at 1-24 (MIKRVNKLVLGISLLFLVISITAG) is a signal peptide. Cys-25 is lipidated: N-palmitoyl cysteine. Cys-25 carries S-diacylglycerol cysteine lipidation.

Belongs to the staphylococcal tandem lipoprotein family.

Its subcellular location is the cell membrane. This is an uncharacterized protein from Staphylococcus aureus.